A 267-amino-acid chain; its full sequence is MADS-box transcription factor 15 (267 aa).

The MADS-box domain occupies 1 to 61; that stretch reads MGRGKVQLKR…GKLYEYATDS (61 aa). In terms of domain architecture, K-box spans 88-178; sequence EGNWCHEYRK…QKELVERQKN (91 aa). A disordered region spans residues 179 to 215; that stretch reads VRGQQQVGQWDQTQVQAQAQAQPQAQTSSSSSSMLRD. Low complexity predominate over residues 182–215; the sequence is QQQVGQWDQTQVQAQAQAQPQAQTSSSSSSMLRD.

In terms of assembly, may interact with the K-box of MADS1 and MADS6.

It localises to the nucleus. Probable transcription factor. The polypeptide is MADS-box transcription factor 15 (MADS15) (Oryza sativa subsp. japonica (Rice)).